Here is a 134-residue protein sequence, read N- to C-terminus: Bet1-like protein At1g29060 (134 aa).

The segment covering 1–12 (MASNRGAGGSLY) has biased composition (gly residues). The interval 1 to 31 (MASNRGAGGSLYGGADPYRSREGLSTRNASG) is disordered. The Cytoplasmic segment spans residues 1–110 (MASNRGAGGS…LSIIRSGNNH (110 aa)). Positions 40–102 (DPMHSDLDDE…KNNIRKLNLS (63 aa)) constitute a t-SNARE coiled-coil homology domain. A helical; Anchor for type IV membrane protein membrane pass occupies residues 111–131 (IMHVVLFALLLFFILYMWSKM). Residues 132–134 (FKR) lie on the Vesicular side of the membrane.

It belongs to the BET1 family.

It is found in the golgi apparatus membrane. The protein resides in the endoplasmic reticulum membrane. Required for vesicular transport from the ER to the Golgi complex. Functions as a SNARE associated with ER-derived vesicles. The chain is Bet1-like protein At1g29060 from Arabidopsis thaliana (Mouse-ear cress).